The primary structure comprises 375 residues: Pulmonary surfactant-associated protein D (375 aa).

The N-terminal stretch at 1–21 (MLLFLLSALVLLTQSLGYLEA) is a signal peptide. Residues Cys-35 and Cys-40 each carry the S-nitrosocysteine modification. The interval 43 to 221 (VESGLPGRDG…DKGAKGESGL (179 aa)) is disordered. The Collagen-like domain maps to 46-222 (GLPGRDGRDG…KGAKGESGLP (177 aa)). Positions 50–65 (RDGRDGREGPRGEKGD) are enriched in basic and acidic residues. A 4-hydroxyproline modification is found at Pro-78. Lys-87 is subject to 5-hydroxylysine. Asn-90 carries an N-linked (GlcNAc...) asparagine glycan. Position 96 is a 4-hydroxyproline (Pro-96). Lys-99 is modified (5-hydroxylysine). The segment covering 105-114 (SGPPGPPGVP) has biased composition (pro residues). Composition is skewed to low complexity over residues 116–132 (PAGREGPLGKQGNIGPQ) and 138–150 (KGEAGPKGEVGAP). Residues Pro-171 and Pro-177 each carry the 4-hydroxyproline modification. The span at 173–189 (ERGAPGNAGAAGSAGVM) shows a compositional bias: low complexity. A compositionally biased stretch (basic and acidic residues) spans 204–216 (KGDKGVPGDKGAK). The stretch at 223 to 251 (DVASLRQQVEALQKQVQHLQAAFSQYKKV) forms a coiled coil. The C-type lectin domain maps to 260–374 (VGEKIFKTAG…CGEKRLVVCE (115 aa)). 2 disulfides stabilise this stretch: Cys-281–Cys-373 and Cys-351–Cys-365.

This sequence belongs to the SFTPD family. Oligomeric complex of 4 set of homotrimers. In terms of processing, hydroxylation on proline residues within the sequence motif, GXPG, is most likely to be 4-hydroxy as this fits the requirement for 4-hydroxylation in vertebrates. Post-translationally, S-nitrosylation at Cys-35 and Cys-40 alters the quaternary structure which results in a pro-inflammatory chemoattractive signaling activity with macrophages.

It localises to the secreted. The protein localises to the extracellular space. It is found in the extracellular matrix. Its subcellular location is the surface film. Contributes to the lung's defense against inhaled microorganisms, organic antigens and toxins. Interacts with compounds such as bacterial lipopolysaccharides, oligosaccharides and fatty acids and modulates leukocyte action in immune response. May participate in the extracellular reorganization or turnover of pulmonary surfactant. Binds strongly maltose residues and to a lesser extent other alpha-glucosyl moieties. This chain is Pulmonary surfactant-associated protein D (SFTPD), found in Macaca mulatta (Rhesus macaque).